The chain runs to 60 residues: Large ribosomal subunit protein bL32 (60 aa).

The tract at residues 1 to 60 is disordered; the sequence is MAVQQVKKSRSKRDIRRSHDSLTNPTLSTDKSTGELHLRHHVSPNGFYKGRKVVDTKSED. Over residues 7-16 the composition is skewed to basic residues; the sequence is KKSRSKRDIR. Polar residues predominate over residues 22–31; sequence LTNPTLSTDK.

Belongs to the bacterial ribosomal protein bL32 family.

In Francisella tularensis subsp. tularensis (strain SCHU S4 / Schu 4), this protein is Large ribosomal subunit protein bL32.